Reading from the N-terminus, the 386-residue chain is N-terminal EF-hand calcium-binding protein 2 (386 aa).

Position 10 is an omega-N-methylarginine (Arg10). Arg42 carries the asymmetric dimethylarginine modification. EF-hand domains follow at residues 60 to 95 (GGTA…GVLN) and 96 to 129 (EKEL…HMGD). Residues Asp73, Asn75, Asp77, Lys79, Glu84, Asp107, Asp109, Thr111, His113, and Glu118 each coordinate Ca(2+). Positions 170 to 201 (LKETANQIQSLLSSVESAVEAIEEQTSQLRQN) form a coiled coil. One can recognise an ABM domain in the interval 286–375 (QLVRQEMAVC…SQPEALSRIL (90 aa)).

In terms of assembly, interacts (calcium-dependent) with ADORA2A and GRM5. In terms of tissue distribution, expressed in brain. Expressed in the spinal dorsal horn with especially strong expression in lamina IIi; found in excitory synaptic boutons and in ependymal cells (at protein level).

It localises to the cytoplasm. The protein localises to the cell projection. It is found in the dendrite. The protein resides in the axon. Its subcellular location is the cell membrane. Functionally, may act as a signaling scaffold protein that senses intracellular calcium. Can modulate ligand-induced internalization of ADORA2A and coupling efficiency of mGluR5/GRM5; for both receptors may regulate signaling activity such as promoting MAPK1/3 (ERK1/2) activation. This chain is N-terminal EF-hand calcium-binding protein 2 (NECAB2), found in Homo sapiens (Human).